The sequence spans 78 residues: Large ribosomal subunit protein bL28 (78 aa).

This sequence belongs to the bacterial ribosomal protein bL28 family.

The polypeptide is Large ribosomal subunit protein bL28 (Microcystis aeruginosa (strain NIES-843 / IAM M-2473)).